A 219-amino-acid polypeptide reads, in one-letter code: Carbonic anhydrase 1 (219 aa).

The Zn(2+) site is built by Cys39, Asp41, His98, and Cys101.

It belongs to the beta-class carbonic anhydrase family. In terms of assembly, oligomer. Zn(2+) serves as cofactor.

The enzyme catalyses hydrogencarbonate + H(+) = CO2 + H2O. In terms of biological role, reversible hydration of carbon dioxide. Carbon dioxide formed in the bicarbonate-dependent decomposition of cyanate by cyanase (CynS) diffuses out of the cell faster than it would be hydrated to bicarbonate, so the apparent function of this enzyme is to catalyze the hydration of carbon dioxide and thus prevent depletion of cellular bicarbonate. This chain is Carbonic anhydrase 1 (cynT), found in Escherichia coli O157:H7.